Reading from the N-terminus, the 301-residue chain is MKNDSSTSAAPMKGLVGPLRSSEPARALPAVPPAVYLLEEAADLLVVHLDFHAALETCERAWQSLAEEPTSGTVVEVKCSLCVVGIQALAEMNRWREVLSWVLQYYQVPEKLPPKVLELCILLYSKMREPRAVLAMADAWLQDPDNQGLPEYGSLAELHLLRVLLPLGRLSEAEGLAVGSAAFSEEQREAVLQAICTARQQHTREHLSSQEQQQMSQEGSFSHKLMSLLRLLRRLWDAAASHLLSQPFKKSLLAALILCLLVLRFDPATPSSLPFLYQLAHLFRRIQKATLSRLYPLALRD.

The Cytoplasmic segment spans residues 1-246; sequence MKNDSSTSAA…DAAASHLLSQ (246 aa). Residues 247-263 form a helical; Signal-anchor for type II membrane protein membrane-spanning segment; sequence PFKKSLLAALILCLLVL. The Peroxisomal segment spans residues 264 to 301; that stretch reads RFDPATPSSLPFLYQLAHLFRRIQKATLSRLYPLALRD.

Belongs to the peroxin-26 family. In terms of assembly, interacts directly with PEX6 via its cytoplasmic domain. Interacts indirectly with PEX1, via its interaction with PEX6.

The protein resides in the peroxisome membrane. Its function is as follows. Peroxisomal docking factor that anchors PEX1 and PEX6 to peroxisome membranes. It is therefore required for the formation of the PEX1-PEX6 AAA ATPase complex, a complex that mediates the extraction of the PEX5 receptor from peroxisomal membrane. In Cricetulus griseus (Chinese hamster), this protein is Peroxisome assembly protein 26 (Pex26).